A 409-amino-acid polypeptide reads, in one-letter code: Beta-glucanase (409 aa).

The signal sequence occupies residues 1 to 31 (MRKNRGFSFSSKAVMMCCLAFLLIPASFAFA). The active-site Proton donor is E95. D156 (nucleophile) is an active-site residue.

This sequence belongs to the glycosyl hydrolase 8 (cellulase D) family.

It catalyses the reaction Hydrolysis of (1-&gt;4)-beta-D-glucosidic linkages in beta-D-glucans containing (1-&gt;3)- and (1-&gt;4)-bonds.. This Niallia circulans (Bacillus circulans) protein is Beta-glucanase (bgc).